We begin with the raw amino-acid sequence, 105 residues long: NADH-quinone oxidoreductase subunit K (105 aa).

3 helical membrane passes run 9–29, 34–54, and 65–85; these read PNYY…GVLV, IVLF…LVTF, and IMAF…LAII.

It belongs to the complex I subunit 4L family. In terms of assembly, NDH-1 is composed of 14 different subunits. Subunits NuoA, H, J, K, L, M, N constitute the membrane sector of the complex.

The protein resides in the cell membrane. It carries out the reaction a quinone + NADH + 5 H(+)(in) = a quinol + NAD(+) + 4 H(+)(out). Functionally, NDH-1 shuttles electrons from NADH, via FMN and iron-sulfur (Fe-S) centers, to quinones in the respiratory chain. The immediate electron acceptor for the enzyme in this species is believed to be a menaquinone. Couples the redox reaction to proton translocation (for every two electrons transferred, four hydrogen ions are translocated across the cytoplasmic membrane), and thus conserves the redox energy in a proton gradient. The polypeptide is NADH-quinone oxidoreductase subunit K (Salinispora tropica (strain ATCC BAA-916 / DSM 44818 / JCM 13857 / NBRC 105044 / CNB-440)).